The sequence spans 371 residues: Cytochrome b (371 aa).

The next 4 helical transmembrane spans lie at 25–45, 69–90, 105–125, and 170–190; these read FGSM…FLAI, WIMQ…YIHI, WLSG…GYVL, and FFAL…IHIM. Histidine 75 and histidine 89 together coordinate heme b. Positions 174 and 188 each coordinate heme b. Histidine 193 is a binding site for a ubiquinone. 4 helical membrane passes run 218–238, 280–300, 312–332, and 339–358; these read HKDI…MSFS, LGGT…PFTH, IMQL…WAAT, and FTII…IMNP.

It belongs to the cytochrome b family. The cytochrome bc1 complex contains 3 respiratory subunits (MT-CYB, CYC1 and UQCRFS1), 2 core proteins (UQCRC1 and UQCRC2) and probably 6 low-molecular weight proteins. It depends on heme b as a cofactor.

The protein resides in the mitochondrion inner membrane. Component of the ubiquinol-cytochrome c reductase complex (complex III or cytochrome b-c1 complex) that is part of the mitochondrial respiratory chain. The b-c1 complex mediates electron transfer from ubiquinol to cytochrome c. Contributes to the generation of a proton gradient across the mitochondrial membrane that is then used for ATP synthesis. The sequence is that of Cytochrome b (MT-CYB) from Coluber constrictor (Eastern racer).